A 442-amino-acid chain; its full sequence is Hydroxycinnamoyltransferase 2 (442 aa).

Active-site proton acceptor residues include His-159 and Asp-389.

It belongs to the plant acyltransferase family. In terms of tissue distribution, expressed in roots and leaves. Expressed at low levels in stems and seeds.

In terms of biological role, hydroxycinnamoyl transferase that catalyzes the transfer of an acyl from p-coumaryol-CoA to various acyl acceptors. Can use feruloyl-CoA and caffeoyl-CoA as acyl donors. The sequence is that of Hydroxycinnamoyltransferase 2 from Oryza sativa subsp. japonica (Rice).